We begin with the raw amino-acid sequence, 368 residues long: Aminomethyltransferase (368 aa).

It belongs to the GcvT family. The glycine cleavage system is composed of four proteins: P, T, L and H.

It carries out the reaction N(6)-[(R)-S(8)-aminomethyldihydrolipoyl]-L-lysyl-[protein] + (6S)-5,6,7,8-tetrahydrofolate = N(6)-[(R)-dihydrolipoyl]-L-lysyl-[protein] + (6R)-5,10-methylene-5,6,7,8-tetrahydrofolate + NH4(+). Functionally, the glycine cleavage system catalyzes the degradation of glycine. This chain is Aminomethyltransferase, found in Xylella fastidiosa (strain M23).